Reading from the N-terminus, the 545-residue chain is Serine/threonine-protein kinase PAK 1 (545 aa).

The interval 1–77 is disordered; the sequence is MSNNGLDIQD…KEKERPEISL (77 aa). Ser2 carries the post-translational modification N-acetylserine. Ser21 carries the phosphoserine; by PKB and autocatalysis modification. Ser57 carries the post-translational modification Phosphoserine; by autocatalysis. A compositionally biased stretch (basic and acidic residues) spans 68–77; it reads KEKERPEISL. The tract at residues 70–140 is autoregulatory region; that stretch reads KERPEISLPS…YNSKKTSNSQ (71 aa). The CRIB domain occupies 75–88; sequence ISLPSDFEHTIHVG. The segment at 75 to 105 is GTPase-binding; sequence ISLPSDFEHTIHVGFDAVTGEFTGMPEQWAR. Residue Thr84 is modified to Phosphothreonine; by OXSR1. At Ser115 the chain carries Phosphoserine. A phosphotyrosine mark is found at Tyr131 and Tyr142. The residue at position 144 (Ser144) is a Phosphoserine; by autocatalysis. The residue at position 149 (Ser149) is a Phosphoserine. The residue at position 153 (Tyr153) is a Phosphotyrosine; by JAK2. The interval 159-198 is disordered; that stretch reads LNVKAVSETPAVPPVSEDEDDDDDDATPPPVIAPRPEHTK. Ser174 bears the Phosphoserine mark. Acidic residues predominate over residues 174–184; the sequence is SEDEDDDDDDA. The residue at position 185 (Thr185) is a Phosphothreonine. Phosphoserine; by autocatalysis is present on Ser199. At Tyr201 the chain carries Phosphotyrosine; by JAK2. Position 204 is a phosphoserine (Ser204). Residues 211-251 are disordered; that stretch reads VTPTRDVATSPISPTENNTTPPDALTRNTEKQKKKPKMSDE. A phosphothreonine mark is found at Thr212 and Thr219. Ser220 and Ser223 each carry phosphoserine. Over residues 220–231 the composition is skewed to polar residues; that stretch reads SPISPTENNTTP. Phosphothreonine is present on residues Thr225, Thr229, and Thr230. Residues 270–521 form the Protein kinase domain; that stretch reads YTRFEKIGQG…AKELLQHQFL (252 aa). 276–284 serves as a coordination point for ATP; sequence IGQGASGTV. Tyr285 carries the phosphotyrosine; by JAK2 modification. Residues Lys299 and 345–347 contribute to the ATP site; that span reads EYL. The active-site Proton acceptor is the Asp389. Thr423 bears the Phosphothreonine; by autocatalysis, BRSK2 and PDPK1 mark.

Belongs to the protein kinase superfamily. STE Ser/Thr protein kinase family. STE20 subfamily. In terms of assembly, homodimer; homodimerization results in autoinhibition. Active as monomer. Interacts with GIT1. Component of cytoplasmic complexes, which also contains PXN, ARHGEF7 and GIT1. Interacts with NISCH. Interacts with DVL1; mediates the formation of a DVL1, MUSK and PAK1 ternary complex involved in AChR clustering. Binds to the caspase-cleaved p110 isoform of CDC2L1 and CDC2L2, p110C, but not the full-length proteins. Interacts with ARHGEF7. Interacts tightly with GTP-bound but not GDP-bound CDC42/P21 and RAC1. Interacts with SCRIB. Interacts with PDPK1. Interacts (via kinase domain) with RAF1. Interacts with NCK1 and NCK2. Interacts with TBCB. Interacts with BRSK2. Interacts with SNAI1. Interacts with CIB1 isoform 2. Interacts with CIB1 (via N-terminal region); the interaction is direct, promotes PAK1 activity and occurs in a calcium-dependent manner. Interacts with INPP5K. Interacts with gamma-tubulin. Interacts with RHOU; the interaction promotes PAK1 activation. It depends on Mg(2+) as a cofactor. Post-translationally, autophosphorylated in trans, meaning that in a dimer, one kinase molecule phosphorylates the other one. Activated by autophosphorylation at Thr-423 in response to a conformation change, triggered by interaction with GTP-bound CDC42 or RAC1. Activated by phosphorylation at Thr-423 by BRSK2 and by PDPK1. Phosphorylated by JAK2 in response to PRL; this increases PAK1 kinase activity. Phosphorylated at Ser-21 by PKB/AKT; this reduces interaction with NCK1 and association with focal adhesion sites. Upon DNA damage, phosphorylated at Thr-212 and translocates to the nucleoplasm. Phosphorylated at tyrosine residues, which can be enhanced by NTN1. Overexpressed in gastric cancer cells and tissues (at protein level).

The protein resides in the cytoplasm. It localises to the cell junction. The protein localises to the focal adhesion. Its subcellular location is the cell projection. It is found in the lamellipodium. The protein resides in the cell membrane. It localises to the ruffle membrane. The protein localises to the invadopodium. Its subcellular location is the nucleus. It is found in the nucleoplasm. The protein resides in the chromosome. It localises to the cytoskeleton. The protein localises to the microtubule organizing center. Its subcellular location is the centrosome. The catalysed reaction is L-seryl-[protein] + ATP = O-phospho-L-seryl-[protein] + ADP + H(+). The enzyme catalyses L-threonyl-[protein] + ATP = O-phospho-L-threonyl-[protein] + ADP + H(+). Activated by binding small G proteins. Binding of GTP-bound CDC42 or RAC1 to the autoregulatory region releases monomers from the autoinhibited dimer, and enables activation by phosphorylation of Thr-423. Phosphorylation of Thr-84 by OXSR1 inhibits activation. Protein kinase involved in intracellular signaling pathways downstream of integrins and receptor-type kinases that plays an important role in cytoskeleton dynamics, in cell adhesion, migration, proliferation, apoptosis, mitosis, and in vesicle-mediated transport processes. Can directly phosphorylate BAD and protects cells against apoptosis. Activated by interaction with CDC42 and RAC1. Functions as a GTPase effector that links the Rho-related GTPases CDC42 and RAC1 to the JNK MAP kinase pathway. Phosphorylates and activates MAP2K1, and thereby mediates activation of downstream MAP kinases. Involved in the reorganization of the actin cytoskeleton, actin stress fibers and of focal adhesion complexes. Phosphorylates the tubulin chaperone TBCB and thereby plays a role in the regulation of microtubule biogenesis and organization of the tubulin cytoskeleton. Plays a role in the regulation of insulin secretion in response to elevated glucose levels. Part of a ternary complex that contains PAK1, DVL1 and MUSK that is important for MUSK-dependent regulation of AChR clustering during the formation of the neuromuscular junction (NMJ). Activity is inhibited in cells undergoing apoptosis, potentially due to binding of CDC2L1 and CDC2L2. Phosphorylates MYL9/MLC2. Phosphorylates RAF1 at 'Ser-338' and 'Ser-339' resulting in: activation of RAF1, stimulation of RAF1 translocation to mitochondria, phosphorylation of BAD by RAF1, and RAF1 binding to BCL2. Phosphorylates SNAI1 at 'Ser-246' promoting its transcriptional repressor activity by increasing its accumulation in the nucleus. In podocytes, promotes NR3C2 nuclear localization. Required for atypical chemokine receptor ACKR2-induced phosphorylation of LIMK1 and cofilin (CFL1) and for the up-regulation of ACKR2 from endosomal compartment to cell membrane, increasing its efficiency in chemokine uptake and degradation. In synapses, seems to mediate the regulation of F-actin cluster formation performed by SHANK3, maybe through CFL1 phosphorylation and inactivation. Plays a role in RUFY3-mediated facilitating gastric cancer cells migration and invasion. In response to DNA damage, phosphorylates MORC2 which activates its ATPase activity and facilitates chromatin remodeling. In neurons, plays a crucial role in regulating GABA(A) receptor synaptic stability and hence GABAergic inhibitory synaptic transmission through its role in F-actin stabilization. In hippocampal neurons, necessary for the formation of dendritic spines and excitatory synapses; this function is dependent on kinase activity and may be exerted by the regulation of actomyosin contractility through the phosphorylation of myosin II regulatory light chain (MLC). Along with GIT1, positively regulates microtubule nucleation during interphase. Phosphorylates FXR1, promoting its localization to stress granules and activity. Phosphorylates ILK on 'Thr-173' and 'Ser-246', promoting nuclear export of ILK. This chain is Serine/threonine-protein kinase PAK 1, found in Homo sapiens (Human).